Reading from the N-terminus, the 523-residue chain is Putative F-box protein At1g30925 (523 aa).

The F-box domain occupies 4–44 (FPNDDLVYEILLRLPAKSVARCSCVSKLRRSILSRQDFTEL).

The protein is Putative F-box protein At1g30925 of Arabidopsis thaliana (Mouse-ear cress).